The chain runs to 296 residues: GTPase Era (296 aa).

The Era-type G domain occupies Lys3–Glu170. The segment at Gly11 to Ser18 is G1. Residue Gly11–Ser18 participates in GTP binding. The tract at residues Gln37–Asn41 is G2. Residues Asp58 to Gly61 form a G3 region. GTP contacts are provided by residues Asp58 to Ile62 and Asn120 to Asp123. Residues Asn120–Asp123 are G4. Positions Ile149–Ala151 are G5. The KH type-2 domain maps to Leu201–Glu278.

It belongs to the TRAFAC class TrmE-Era-EngA-EngB-Septin-like GTPase superfamily. Era GTPase family. Monomer.

It is found in the cytoplasm. The protein localises to the cell membrane. Its function is as follows. An essential GTPase that binds both GDP and GTP, with rapid nucleotide exchange. Plays a role in 16S rRNA processing and 30S ribosomal subunit biogenesis and possibly also in cell cycle regulation and energy metabolism. The sequence is that of GTPase Era from Clostridium botulinum (strain Langeland / NCTC 10281 / Type F).